We begin with the raw amino-acid sequence, 66 residues long: Putative alpha-neurotoxin RjAa16 (66 aa).

Residues 1 to 60 form the LCN-type CS-alpha/beta domain; the sequence is KEGYPVDWGNCKYECMSDAYCKDLCVDRKAKSGYCYKLNWFCYCEGLPDDSPIKTNGHCR. Cystine bridges form between C11–C59, C15–C35, C21–C42, and C25–C44.

This sequence belongs to the long (4 C-C) scorpion toxin superfamily. Sodium channel inhibitor family. Alpha subfamily. In terms of tissue distribution, expressed by the venom gland.

The protein resides in the secreted. In terms of biological role, alpha toxins bind voltage-independently at site-3 of sodium channels (Nav) and inhibits the inactivation of the activated channels, thereby blocking neuronal transmission. The sequence is that of Putative alpha-neurotoxin RjAa16 from Rhopalurus junceus (Caribbean blue scorpion).